A 146-amino-acid chain; its full sequence is Nuclear export protein (146 aa).

As to quaternary structure, interacts with host HSC70.

Its subcellular location is the host cytoplasm. Functionally, may mediate the nuclear export of encapsidated genomic RNAs (ribonucleoproteins, RNPs). Interaction of viral NEP with M1-Hsc70 is thought to promote nuclear export of the viral encapsidated genomes. The sequence is that of Nuclear export protein from Infectious salmon anemia virus (isolate Atlantic salmon/Norway/810/9/99) (ISAV).